Consider the following 198-residue polypeptide: Nucleoid occlusion factor SlmA (198 aa).

The region spanning R9 to L70 is the HTH tetR-type domain. The H-T-H motif DNA-binding region spans T33–F52. A coiled-coil region spans residues D119 to K144.

Belongs to the nucleoid occlusion factor SlmA family. As to quaternary structure, homodimer. Interacts with FtsZ.

The protein localises to the cytoplasm. Its subcellular location is the nucleoid. Functionally, required for nucleoid occlusion (NO) phenomenon, which prevents Z-ring formation and cell division over the nucleoid. Acts as a DNA-associated cell division inhibitor that binds simultaneously chromosomal DNA and FtsZ, and disrupts the assembly of FtsZ polymers. SlmA-DNA-binding sequences (SBS) are dispersed on non-Ter regions of the chromosome, preventing FtsZ polymerization at these regions. The chain is Nucleoid occlusion factor SlmA from Sodalis glossinidius (strain morsitans).